A 105-amino-acid chain; its full sequence is Met repressor (105 aa).

Belongs to the MetJ family. As to quaternary structure, homodimer.

It is found in the cytoplasm. Functionally, this regulatory protein, when combined with SAM (S-adenosylmethionine) represses the expression of the methionine regulon and of enzymes involved in SAM synthesis. The chain is Met repressor from Shigella boydii serotype 18 (strain CDC 3083-94 / BS512).